The primary structure comprises 374 residues: Lipoyl synthase, mitochondrial (374 aa).

Residues 1-19 (MHSRSALLYRFLRPASRCF) constitute a mitochondrion transit peptide. Residues cysteine 103, cysteine 108, cysteine 114, cysteine 134, cysteine 138, cysteine 141, and serine 350 each coordinate [4Fe-4S] cluster. In terms of domain architecture, Radical SAM core spans 119–339 (ETGTATATIM…RLLGMEMGFR (221 aa)).

Belongs to the radical SAM superfamily. Lipoyl synthase family. The cofactor is [4Fe-4S] cluster. As to expression, expressed in leaves and flowers, but not in roots. Expressed in roots, rosette leaves, cauline leaves, stems, flowers and siliques.

It localises to the mitochondrion. The enzyme catalyses [[Fe-S] cluster scaffold protein carrying a second [4Fe-4S](2+) cluster] + N(6)-octanoyl-L-lysyl-[protein] + 2 oxidized [2Fe-2S]-[ferredoxin] + 2 S-adenosyl-L-methionine + 4 H(+) = [[Fe-S] cluster scaffold protein] + N(6)-[(R)-dihydrolipoyl]-L-lysyl-[protein] + 4 Fe(3+) + 2 hydrogen sulfide + 2 5'-deoxyadenosine + 2 L-methionine + 2 reduced [2Fe-2S]-[ferredoxin]. It participates in protein modification; protein lipoylation via endogenous pathway; protein N(6)-(lipoyl)lysine from octanoyl-[acyl-carrier-protein]: step 2/2. In terms of biological role, catalyzes the radical-mediated insertion of two sulfur atoms into the C-6 and C-8 positions of the octanoyl moiety bound to the lipoyl domains of lipoate-dependent enzymes, thereby converting the octanoylated domains into lipoylated derivatives. Together with LIP2 is essential for mitochondrial protein lipoylation during seed development. Required for the lipoylation of mitochondrial pyruvate dehydrogenase component E2 proteins in leaves and roots. This Arabidopsis thaliana (Mouse-ear cress) protein is Lipoyl synthase, mitochondrial.